Consider the following 180-residue polypeptide: Threonylcarbamoyl-AMP synthase (180 aa).

Residues 1-180 enclose the YrdC-like domain; sequence MRARALQHFL…DLITGAIVRP (180 aa).

The protein belongs to the SUA5 family. TsaC subfamily.

It localises to the cytoplasm. The catalysed reaction is L-threonine + hydrogencarbonate + ATP = L-threonylcarbamoyladenylate + diphosphate + H2O. Functionally, required for the formation of a threonylcarbamoyl group on adenosine at position 37 (t(6)A37) in tRNAs that read codons beginning with adenine. Catalyzes the conversion of L-threonine, HCO(3)(-)/CO(2) and ATP to give threonylcarbamoyl-AMP (TC-AMP) as the acyladenylate intermediate, with the release of diphosphate. The polypeptide is Threonylcarbamoyl-AMP synthase (Methylobacillus flagellatus (strain ATCC 51484 / DSM 6875 / VKM B-1610 / KT)).